The following is a 171-amino-acid chain: Crossover junction endodeoxyribonuclease RuvC (171 aa).

Catalysis depends on residues D12, E72, and D144. Positions 12, 72, and 144 each coordinate Mg(2+).

Belongs to the RuvC family. As to quaternary structure, homodimer which binds Holliday junction (HJ) DNA. The HJ becomes 2-fold symmetrical on binding to RuvC with unstacked arms; it has a different conformation from HJ DNA in complex with RuvA. In the full resolvosome a probable DNA-RuvA(4)-RuvB(12)-RuvC(2) complex forms which resolves the HJ. Mg(2+) is required as a cofactor.

It is found in the cytoplasm. The catalysed reaction is Endonucleolytic cleavage at a junction such as a reciprocal single-stranded crossover between two homologous DNA duplexes (Holliday junction).. The RuvA-RuvB-RuvC complex processes Holliday junction (HJ) DNA during genetic recombination and DNA repair. Endonuclease that resolves HJ intermediates. Cleaves cruciform DNA by making single-stranded nicks across the HJ at symmetrical positions within the homologous arms, yielding a 5'-phosphate and a 3'-hydroxyl group; requires a central core of homology in the junction. The consensus cleavage sequence is 5'-(A/T)TT(C/G)-3'. Cleavage occurs on the 3'-side of the TT dinucleotide at the point of strand exchange. HJ branch migration catalyzed by RuvA-RuvB allows RuvC to scan DNA until it finds its consensus sequence, where it cleaves and resolves the cruciform DNA. The polypeptide is Crossover junction endodeoxyribonuclease RuvC (Afipia carboxidovorans (strain ATCC 49405 / DSM 1227 / KCTC 32145 / OM5) (Oligotropha carboxidovorans)).